We begin with the raw amino-acid sequence, 428 residues long: Serine--tRNA ligase (428 aa).

L-serine is bound at residue 231-233 (TAE). Residue 262-264 (RSE) coordinates ATP. Glu285 contacts L-serine. Residue 349 to 352 (EISS) coordinates ATP. An L-serine-binding site is contributed by Ser385.

This sequence belongs to the class-II aminoacyl-tRNA synthetase family. Type-1 seryl-tRNA synthetase subfamily. In terms of assembly, homodimer. The tRNA molecule binds across the dimer.

It localises to the cytoplasm. The catalysed reaction is tRNA(Ser) + L-serine + ATP = L-seryl-tRNA(Ser) + AMP + diphosphate + H(+). The enzyme catalyses tRNA(Sec) + L-serine + ATP = L-seryl-tRNA(Sec) + AMP + diphosphate + H(+). It participates in aminoacyl-tRNA biosynthesis; selenocysteinyl-tRNA(Sec) biosynthesis; L-seryl-tRNA(Sec) from L-serine and tRNA(Sec): step 1/1. Its function is as follows. Catalyzes the attachment of serine to tRNA(Ser). Is also able to aminoacylate tRNA(Sec) with serine, to form the misacylated tRNA L-seryl-tRNA(Sec), which will be further converted into selenocysteinyl-tRNA(Sec). This is Serine--tRNA ligase from Staphylococcus aureus (strain MW2).